We begin with the raw amino-acid sequence, 226 residues long: Transmembrane gamma-carboxyglutamic acid protein 4 (226 aa).

The signal sequence occupies residues 1–17 (MFPLLIVLSQLPRLTLA). Residues 18–49 (VPHCIRSLKDSEHAPEEVFASKEAANIFMHRR) constitute a propeptide that is removed on maturation. Over 50–113 (LLNNRFDLEL…GSDVNKEKID (64 aa)) the chain is Extracellular. Residues 52–98 (NNRFDLELFTPGDLERECYEEFCSYEEAREILGDDENTIKFWQTYSI) form the Gla domain. Cysteines 69 and 74 form a disulfide. Position 72 is a 4-carboxyglutamate (glutamate 72). A helical transmembrane segment spans residues 114–134 (VMSLLTGLIVAGVFLVIFGLV). Topologically, residues 135-226 (GYYVCLTKCK…FKKSMSLPSH (92 aa)) are cytoplasmic. The residue at position 164 (serine 164) is a Phosphoserine. The short motif at 186–189 (LPSY) is the LPXY motif; mediates binding to WW domain-containing proteins element. Residues 204 to 207 (PPPY) carry the PPXY motif; mediates binding to WW domain-containing proteins motif.

The protein belongs to the commissureless family. As to quaternary structure, interacts (via cytoplasmic domain) with WW domain-containing proteins MAGI1, MAGI3, NEDD4, NEDD4L, WWTR1/TAZ and YAP1. Gamma-carboxyglutamate residues are formed by vitamin K dependent carboxylation. These residues are essential for the binding of calcium.

It localises to the endoplasmic reticulum-Golgi intermediate compartment membrane. The protein localises to the cell membrane. May control axon guidance across the CNS. Prevents the delivery of ROBO1 at the cell surface and down-regulates its expression. In Mus musculus (Mouse), this protein is Transmembrane gamma-carboxyglutamic acid protein 4 (Prrg4).